The sequence spans 216 residues: Imidazole glycerol phosphate synthase subunit HisH (216 aa).

In terms of domain architecture, Glutamine amidotransferase type-1 spans 2–216; sequence RVAIIDYGSG…LISNFLRWKP (215 aa). The Nucleophile role is filled by cysteine 88. Catalysis depends on residues histidine 196 and glutamate 198.

In terms of assembly, heterodimer of HisH and HisF.

It is found in the cytoplasm. It catalyses the reaction 5-[(5-phospho-1-deoxy-D-ribulos-1-ylimino)methylamino]-1-(5-phospho-beta-D-ribosyl)imidazole-4-carboxamide + L-glutamine = D-erythro-1-(imidazol-4-yl)glycerol 3-phosphate + 5-amino-1-(5-phospho-beta-D-ribosyl)imidazole-4-carboxamide + L-glutamate + H(+). It carries out the reaction L-glutamine + H2O = L-glutamate + NH4(+). Its pathway is amino-acid biosynthesis; L-histidine biosynthesis; L-histidine from 5-phospho-alpha-D-ribose 1-diphosphate: step 5/9. In terms of biological role, IGPS catalyzes the conversion of PRFAR and glutamine to IGP, AICAR and glutamate. The HisH subunit catalyzes the hydrolysis of glutamine to glutamate and ammonia as part of the synthesis of IGP and AICAR. The resulting ammonia molecule is channeled to the active site of HisF. This is Imidazole glycerol phosphate synthase subunit HisH from Agrobacterium fabrum (strain C58 / ATCC 33970) (Agrobacterium tumefaciens (strain C58)).